We begin with the raw amino-acid sequence, 860 residues long: Paladin (860 aa).

A disordered region spans residues 1–24 (MGTTASAAPQATLHERLHSDSMTD). G2 is lipidated: N-myristoyl glycine. Basic and acidic residues predominate over residues 13-24 (LHERLHSDSMTD).

This sequence belongs to the paladin family.

It is found in the cytoplasm. The protein localises to the cytosol. This Danio rerio (Zebrafish) protein is Paladin (pald1).